Consider the following 432-residue polypeptide: Sensor histidine kinase YrkQ (432 aa).

Residues 1–12 (MAHLKFTLTKKL) are Cytoplasmic-facing. A helical membrane pass occupies residues 13–33 (ALLIMVAAIVSGVIFLTLQKI). The Extracellular portion of the chain corresponds to 34 to 145 (TDDLIEGYLS…GFYSSRYYDL (112 aa)). A helical membrane pass occupies residues 146-166 (AFALDLLGATLIFLIIVLFGI). An HAMP domain is found at 167-219 (RQSLRYLKTIHQEIHILEGGELDYEMTIKGHDELAMIAKSIEDLRKAFLDKLK). Residues 167-432 (RQSLRYLKTI…IVLRFWNTKM (266 aa)) are Cytoplasmic-facing. The Histidine kinase domain maps to 234 to 432 (EMSHDMRTPL…IVLRFWNTKM (199 aa)). His237 carries the post-translational modification Phosphohistidine; by autocatalysis.

The protein localises to the cell membrane. It catalyses the reaction ATP + protein L-histidine = ADP + protein N-phospho-L-histidine.. Functionally, member of the two-component regulatory system YrkQ/YrkP. Probably activates YrkP by phosphorylation. In Bacillus subtilis (strain 168), this protein is Sensor histidine kinase YrkQ (yrkQ).